Consider the following 1639-residue polypeptide: RIMS-binding protein 3A (1639 aa).

Disordered stretches follow at residues 1-22 (MAKD…SSPA), 215-240 (GSPD…CHAP), and 295-364 (SLDS…LTPS). The stretch at 21-143 (PAAAVLENQR…ELQRQLAEEL (123 aa)) forms a coiled coil. The span at 326–339 (SPPPSPLPPPPPPS) shows a compositional bias: pro residues. Coiled coils occupy residues 409-442 (QADE…QETN) and 480-619 (LAKD…AEEN). Residues 697 to 811 (CRPGHPPEQP…DRDTASEVDD (115 aa)) form a disordered region. Polar residues-rich tracts occupy residues 707–718 (WETSQMPESQVK) and 761–775 (SVPQ…SQPL). Positions 776-790 (SKKTSSQSNSSSEGS) are enriched in low complexity. The 68-residue stretch at 832–899 (PKLKIFMAQY…PSNFVEQIPD (68 aa)) folds into the SH3 1 domain. Fibronectin type-III domains lie at 995-1083 (APMQ…TLLA) and 1088-1184 (PPLD…IPED). 2 disordered regions span residues 1251–1273 (PRRQ…GAGS) and 1292–1330 (QKSP…FIHL). A compositionally biased stretch (polar residues) spans 1293–1305 (KSPQNHRPPSVSD). 2 SH3 domains span residues 1452–1520 (TPAR…EMEV) and 1569–1636 (WTPK…HMSL).

Belongs to the RIMBP family. As to quaternary structure, interacts with LRGUK (via guanylate kinase-like domain). Interacts (via C-terminus) with HOOK1 (via coiled-coil region).

The protein localises to the cytoplasm. It is found in the cytoskeleton. Probable component of the manchette, a microtubule-based structure which plays a key role in sperm head morphogenesis during late stages of sperm development. The sequence is that of RIMS-binding protein 3A (RIMBP3) from Homo sapiens (Human).